Consider the following 205-residue polypeptide: Thiamine-phosphate synthase (205 aa).

4-amino-2-methyl-5-(diphosphooxymethyl)pyrimidine is bound by residues 37–41 (QVREK) and N69. Positions 70 and 89 each coordinate Mg(2+). A 4-amino-2-methyl-5-(diphosphooxymethyl)pyrimidine-binding site is contributed by S108. 134 to 136 (TGS) contacts 2-[(2R,5Z)-2-carboxy-4-methylthiazol-5(2H)-ylidene]ethyl phosphate. Residue K137 coordinates 4-amino-2-methyl-5-(diphosphooxymethyl)pyrimidine. 2-[(2R,5Z)-2-carboxy-4-methylthiazol-5(2H)-ylidene]ethyl phosphate is bound by residues G165 and 185-186 (IS).

It belongs to the thiamine-phosphate synthase family. Mg(2+) serves as cofactor.

It catalyses the reaction 2-[(2R,5Z)-2-carboxy-4-methylthiazol-5(2H)-ylidene]ethyl phosphate + 4-amino-2-methyl-5-(diphosphooxymethyl)pyrimidine + 2 H(+) = thiamine phosphate + CO2 + diphosphate. It carries out the reaction 2-(2-carboxy-4-methylthiazol-5-yl)ethyl phosphate + 4-amino-2-methyl-5-(diphosphooxymethyl)pyrimidine + 2 H(+) = thiamine phosphate + CO2 + diphosphate. The catalysed reaction is 4-methyl-5-(2-phosphooxyethyl)-thiazole + 4-amino-2-methyl-5-(diphosphooxymethyl)pyrimidine + H(+) = thiamine phosphate + diphosphate. Its pathway is cofactor biosynthesis; thiamine diphosphate biosynthesis; thiamine phosphate from 4-amino-2-methyl-5-diphosphomethylpyrimidine and 4-methyl-5-(2-phosphoethyl)-thiazole: step 1/1. Functionally, condenses 4-methyl-5-(beta-hydroxyethyl)thiazole monophosphate (THZ-P) and 2-methyl-4-amino-5-hydroxymethyl pyrimidine pyrophosphate (HMP-PP) to form thiamine monophosphate (TMP). The sequence is that of Thiamine-phosphate synthase from Clostridium botulinum (strain Kyoto / Type A2).